The following is a 416-amino-acid chain: Glutamate dehydrogenase (416 aa).

The active site involves K105.

This sequence belongs to the Glu/Leu/Phe/Val dehydrogenases family. As to quaternary structure, homohexamer.

It carries out the reaction L-glutamate + NAD(+) + H2O = 2-oxoglutarate + NH4(+) + NADH + H(+). It catalyses the reaction L-glutamate + NADP(+) + H2O = 2-oxoglutarate + NH4(+) + NADPH + H(+). The protein is Glutamate dehydrogenase (gdhA) of Thermotoga maritima (strain ATCC 43589 / DSM 3109 / JCM 10099 / NBRC 100826 / MSB8).